The sequence spans 103 residues: Small ribosomal subunit protein uS10 (103 aa).

Belongs to the universal ribosomal protein uS10 family. In terms of assembly, part of the 30S ribosomal subunit.

Involved in the binding of tRNA to the ribosomes. The polypeptide is Small ribosomal subunit protein uS10 (Shewanella frigidimarina (strain NCIMB 400)).